We begin with the raw amino-acid sequence, 1026 residues long: Multidrug resistance protein MdtC (1026 aa).

A run of 11 helical transmembrane segments spans residues 16-36 (LLALAITLVGLLGLRLLPVAP), 333-353 (EVEQSLAIAIALVILVVFLFL), 360-380 (LIPAVTVPVSLIGTCAAIYLC), 387-407 (LSLMALTIASGFVVDDAIVVL), 435-455 (VFSISLSLAAVFIPLLFMGGI), 459-479 (LFHEFAITLSASIAISLLIAL), 528-548 (WVLLTLLAVIGLNIWLYISIP), 853-873 (LLLILAAIATVYIVLGILYES), 897-917 (LFNAPFSLIALIGIMLLIGLV), 953-973 (PILMTTLAALFGALPLAFSYG), and 984-1004 (ITIVGGLLVSQILTLYTTPVV).

It belongs to the resistance-nodulation-cell division (RND) (TC 2.A.6) family. MdtC subfamily. In terms of assembly, part of a tripartite efflux system composed of MdtA, MdtB and MdtC. MdtC forms a heteromultimer with MdtB.

It localises to the cell inner membrane. In Edwardsiella ictaluri (strain 93-146), this protein is Multidrug resistance protein MdtC.